Here is a 261-residue protein sequence, read N- to C-terminus: Proliferating cell nuclear antigen (261 aa).

Lysine 14, lysine 77, and lysine 80 each carry N6-acetyllysine. The DNA-binding element occupies 61-80 (RCDRNLAMGVNLTSMSKILK). Cysteine 135 and cysteine 162 form a disulfide bridge. A Glycyl lysine isopeptide (Lys-Gly) (interchain with G-Cter in SUMO2); alternate cross-link involves residue lysine 164. Lysine 164 is covalently cross-linked (Glycyl lysine isopeptide (Lys-Gly) (interchain with G-Cter in ubiquitin); alternate). Position 211 is a phosphotyrosine; by EGFR (tyrosine 211). An N6-acetyllysine modification is found at lysine 248. Lysine 254 participates in a covalent cross-link: Glycyl lysine isopeptide (Lys-Gly) (interchain with G-Cter in SUMO2).

It belongs to the PCNA family. As to quaternary structure, homotrimer. Interacts with p300/EP300; the interaction occurs on chromatin in UV-irradiated damaged cells. Interacts with CREBBP (via transactivation domain and C-terminus); the interaction occurs on chromatin in UV-irradiated damaged cells. Directly interacts with POLD1, POLD3 and POLD4 subunits of the DNA polymerase delta complex, POLD3 being the major interacting partner; the interaction with POLD3 is inhibited by CDKN1A/p21(CIP1). Forms a complex with activator 1 heteropentamer in the presence of ATP. Interacts with EXO1, POLH, POLK, DNMT1, ERCC5, FEN1, CDC6 and POLDIP2. Interacts with POLB. Interacts with APEX2; this interaction is triggered by reactive oxygen species and increased by misincorporation of uracil in nuclear DNA. Forms a ternary complex with DNTTIP2 and core histone. Interacts with KCTD10 and PPP1R15A. Interacts with SMARCA5/SNF2H. Interacts with BAZ1B/WSTF; the interaction is direct and is required for BAZ1B/WSTF binding to replication foci during S phase. Interacts with HLTF and SHPRH. Interacts with NUDT15; this interaction is disrupted in response to UV irradiation and acetylation. Interacts with CDKN1A/p21(CIP1) and CDT1; interacts via their PIP-box which also recruits the DCX(DTL) complex. The interaction with CDKN1A inhibits POLD3 binding. Interacts with DDX11. Interacts with EGFR; positively regulates PCNA. Interacts with PARPBP. Interacts (when ubiquitinated) with SPRTN; leading to enhance RAD18-mediated PCNA ubiquitination. Interacts (when polyubiquitinated) with ZRANB3. Interacts with SMARCAD1. Interacts with CDKN1C. Interacts with PCLAF (via PIP-box). Interacts with RTEL1 (via PIP-box); the interaction is direct and essential for the suppression of telomere fragility. Interacts with FAM111A (via PIP-box); the interaction is direct and required for PCNA loading on chromatin binding. Interacts with LIG1. Interacts with SETMAR. Interacts with ANKRD17. Interacts with FBXO18/FBH1 (via PIP-box); the interaction recruits the DCX(DTL) complex and promotes ubiquitination and degradation of FBXO18/FBH1. Interacts with POLN. Interacts with SDE2 (via PIP-box); the interaction is direct and prevents ultraviolet light induced monoubiquitination. Component of the replisome complex composed of at least DONSON, MCM2, MCM7, PCNA and TICRR; interaction at least with PCNA occurs during DNA replication. Interacts with MAPK15; the interaction is chromatin binding dependent and prevents MDM2-mediated PCNA destruction by inhibiting the association of PCNA with MDM2. Interacts with PARP10 (via PIP-box). Interacts with DDI2. Interacts with HMCES (via PIP-box). Interacts with TRAIP (via PIP-box). Interacts with UHRF2. Interacts with ALKBH2; this interaction is enhanced during the S-phase of the cell cycle. Interacts with ATAD5; the interaction promotes USP1-mediated PCNA deubiquitination. Interacts (when phosphorylated) with GRB2. Interacts with ANG. Interacts with nuclear UNG; this interaction mediates UNG recruitment to S-phase replication foci. Interacts with ERCC6L2 (via an atypical PIP-box); this interaction facilitates cenrtomeric localization of ERCC6L2. In terms of processing, phosphorylated. Phosphorylation at Tyr-211 by EGFR stabilizes chromatin-associated PCNA. Acetylated by CREBBP and p300/EP300; preferentially acetylated by CREBBP on Lys-80, Lys-13 and Lys-14 and on Lys-77 by p300/EP300 upon loading on chromatin in response to UV irradiation. Lysine acetylation disrupts association with chromatin, hence promoting PCNA ubiquitination and proteasomal degradation in response to UV damage in a CREBBP- and EP300-dependent manner. Acetylation disrupts interaction with NUDT15 and promotes degradation. Post-translationally, ubiquitinated. Following DNA damage, can be either monoubiquitinated to stimulate direct bypass of DNA lesions by specialized DNA polymerases or polyubiquitinated to promote recombination-dependent DNA synthesis across DNA lesions by template switching mechanisms. Following induction of replication stress, monoubiquitinated by the UBE2B-RAD18 complex on Lys-164, leading to recruit translesion (TLS) polymerases, which are able to synthesize across DNA lesions in a potentially error-prone manner. An error-free pathway also exists and requires non-canonical polyubiquitination on Lys-164 through 'Lys-63' linkage of ubiquitin moieties by the E2 complex UBE2N-UBE2V2 and the E3 ligases, HLTF, RNF8 and SHPRH. This error-free pathway, also known as template switching, employs recombination mechanisms to synthesize across the lesion, using as a template the undamaged, newly synthesized strand of the sister chromatid. Monoubiquitination at Lys-164 also takes place in undamaged proliferating cells, and is mediated by the DCX(DTL) complex, leading to enhance PCNA-dependent translesion DNA synthesis. Sumoylated during S phase. In terms of processing, methylated on glutamate residues by ARMT1.

The protein resides in the nucleus. In terms of biological role, auxiliary protein of DNA polymerase delta and epsilon, is involved in the control of eukaryotic DNA replication by increasing the polymerase's processibility during elongation of the leading strand. Induces a robust stimulatory effect on the 3'-5' exonuclease and 3'-phosphodiesterase, but not apurinic-apyrimidinic (AP) endonuclease, APEX2 activities. Has to be loaded onto DNA in order to be able to stimulate APEX2. Plays a key role in DNA damage response (DDR) by being conveniently positioned at the replication fork to coordinate DNA replication with DNA repair and DNA damage tolerance pathways. Acts as a loading platform to recruit DDR proteins that allow completion of DNA replication after DNA damage and promote postreplication repair: Monoubiquitinated PCNA leads to recruitment of translesion (TLS) polymerases, while 'Lys-63'-linked polyubiquitination of PCNA is involved in error-free pathway and employs recombination mechanisms to synthesize across the lesion. The protein is Proliferating cell nuclear antigen (PCNA) of Cricetulus griseus (Chinese hamster).